The following is a 521-amino-acid chain: NAD(P)H-quinone oxidoreductase subunit 2 (521 aa).

Transmembrane regions (helical) follow at residues 16–36 (ILPE…DLIG), 40–60 (VALA…GLLV), 80–100 (LSII…LMSV), 110–130 (LAEF…LSAA), 133–153 (LVMV…MTGY), 168–188 (LLIG…LYGL), 212–232 (LGLA…ISAV), 246–266 (PTPV…AVAI), 280–300 (WHVI…VVAL), 308–328 (MLAY…VAGS), 336–356 (VFYM…IILF), 380–400 (LGLS…GFFG), 402–422 (IYIF…LGLV), and 468–488 (VGIV…NPLF).

It belongs to the complex I subunit 2 family. As to quaternary structure, NDH-1 can be composed of about 15 different subunits; different subcomplexes with different compositions have been identified which probably have different functions.

It is found in the cellular thylakoid membrane. It catalyses the reaction a plastoquinone + NADH + (n+1) H(+)(in) = a plastoquinol + NAD(+) + n H(+)(out). The catalysed reaction is a plastoquinone + NADPH + (n+1) H(+)(in) = a plastoquinol + NADP(+) + n H(+)(out). Functionally, NDH-1 shuttles electrons from an unknown electron donor, via FMN and iron-sulfur (Fe-S) centers, to quinones in the respiratory and/or the photosynthetic chain. The immediate electron acceptor for the enzyme in this species is believed to be plastoquinone. Couples the redox reaction to proton translocation, and thus conserves the redox energy in a proton gradient. Cyanobacterial NDH-1 also plays a role in inorganic carbon-concentration. The polypeptide is NAD(P)H-quinone oxidoreductase subunit 2 (Synechocystis sp. (strain ATCC 27184 / PCC 6803 / Kazusa)).